Here is a 180-residue protein sequence, read N- to C-terminus: Uterocalin (180 aa).

Positions 1 to 18 are cleaved as a signal peptide; the sequence is MNLLLLAMGLILPRRPHA. An intrachain disulfide couples Cys82 to Cys175. An N-linked (GlcNAc...) asparagine glycan is attached at Asn101.

It belongs to the calycin superfamily. Lipocalin family. Expressed in glandular and lumenal epithelia of the endometrium. Is transferred to the embryonic capsule, the conceptus and the yolk sac.

The protein resides in the secreted. Functionally, binds fatty acids and retinol. Is specialized for the preattachment embryo. May be important to maintain the pregnancy and may transport small hydrophobic ligands from mother to the developing embryo. This Equus caballus (Horse) protein is Uterocalin.